The primary structure comprises 336 residues: NmrA-like family domain-containing oxidoreductase malD (336 aa).

NADP(+) contacts are provided by residues 12 to 17 (GGTGNQ), 40 to 44 (RDPTS), 61 to 62 (DG), 82 to 84 (TNS), lysine 140, and 163 to 166 (FMEA).

It belongs to the NmrA-type oxidoreductase family.

Its function is as follows. NmrA-like family domain-containing oxidoreductase; part of the gene cluster that mediates the biosynthesis of malbrancheamide, a dichlorinated fungal indole alkaloid that belongs to a family of natural products containing a characteristic bicyclo[2.2.2]diazaoctane core. The first step of malbrancheamide biosynthesis involves coupling of L-proline and L-tryptophan by malG, a bimodular NRPS, to produce L-Pro-L-Trp aldehyde through reductive offloading. This compound undergoes spontaneous cyclization and dehydration to give a dienamine which is reverse prenylated at C-2 by malE. The other prenyltransferase present in the cluster, malB, displays modest activity, suggesting that may be a redundant gene in the pathway. Subsequently, a [4+2] Diels-Alder cyclo-addition catalyzed by the bifunctional enzyme malC forms the characteristic bicyclo[2.2.2]diazaoctane ring of premalbrancheamid. Finally, the flavin-dependent halogenase malA catalyzes the iterative dichlorination of the indole ring of premalbrancheamide to yield C-9 monochlorinated malbrancheamide B, C-8 monochlorinated isomalbrancheamide B, and dichlorinated malbrancheamide. MalA is also able to brominate premalbrancheamide at C-9 to yield malbrancheamide C, and, to a lesser extend, at C-8 to yield isomalbrancheamide C. Finally, malA can brominate C-9 monochlorinated malbrancheamide B at C-8 to yield malbrancheamide D, or C-8 monochlorinated isomalbrancheamide B at C-9 to produce isomalbrancheamide D. This chain is NmrA-like family domain-containing oxidoreductase malD, found in Malbranchea aurantiaca.